A 250-amino-acid chain; its full sequence is Small ribosomal subunit protein uS2 (250 aa).

This sequence belongs to the universal ribosomal protein uS2 family.

This Teredinibacter turnerae (strain ATCC 39867 / T7901) protein is Small ribosomal subunit protein uS2.